Here is a 617-residue protein sequence, read N- to C-terminus: E3 ubiquitin-protein ligase synoviolin (617 aa).

Topologically, residues 1–4 are cytoplasmic; it reads MFRT. The interval 1 to 84 is necessary and sufficient for SEL1L interaction; the sequence is MFRTAVMMAA…EHLLERSWYA (84 aa). Residues 1 to 251 are involved in FAM8A1 interaction; the sequence is MFRTAVMMAA…LFAIRPMYLA (251 aa). Residues 5-25 form a helical membrane-spanning segment; sequence AVMMAASLALTGAVVAHAYYL. Topologically, residues 26–41 are lumenal; the sequence is KHQFYPTVVYLTKSSP. Residues 42–62 form a helical membrane-spanning segment; the sequence is SMAVLYIQAFVLVFLLGKVMG. At 63–98 the chain is on the cytoplasmic side; sequence KVFFGQLRAAEMEHLLERSWYAVTETCLAFTVFRDD. Residues 99–119 form a helical membrane-spanning segment; that stretch reads FSPRFVALFTLLLFLKCFHWL. The Lumenal segment spans residues 120 to 140; sequence AEDRVDFMERSPNISWLFHCR. Residues 141 to 161 traverse the membrane as a helical segment; sequence IVSLMFLLGILDFLFVSHAYH. Topologically, residues 162–169 are cytoplasmic; that stretch reads SILTRGAS. A helical membrane pass occupies residues 170–190; the sequence is VQLVFGFEYAILMTMVLTIFI. Residues 191–224 lie on the Lumenal side of the membrane; that stretch reads KYVLHSVDLQSENPWDNKAVYMLYTELFTGFIKV. The helical transmembrane segment at 225–245 threads the bilayer; sequence LLYMAFMTIMIKVHTFPLFAI. The interval 236 to 270 is interaction with p53/TP53; the sequence is KVHTFPLFAIRPMYLAMRQFKKAVTDAIMSRRAIR. Residues 246–617 lie on the Cytoplasmic side of the membrane; that stretch reads RPMYLAMRQF…LQKLESPVAH (372 aa). 8 residues coordinate Zn(2+): Cys-291, Cys-294, Cys-307, His-309, His-312, Cys-315, Cys-326, and Cys-329. The RING-type; atypical zinc-finger motif lies at 291–330; the sequence is CIICREEMVTGAKRLPCNHIFHTSCLRSWFQRQQTCPTCR. Disordered regions lie at residues 337 to 375, 393 to 453, and 535 to 617; these read SLPA…GLLP, PVPP…PAPG, and RPAT…PVAH. Positions 341–375 are enriched in pro residues; it reads QSPPPPEPADQGPPPAPHPPPLLPQPPNFPQGLLP. Residues 417–451 are compositionally biased toward low complexity; it reads PSGAATTTAAGTSATAASATASGPGSGSAPEAGPA. Positions 480–535 are HAF-H domain; necessary to form higher-order Hrd1 complexes; that stretch reads GFAGLTPEELRALEGHERQHLEARLQSLRNIHTLLDAAMLQINQYLTVLASLGPPR. Residues 537–569 are compositionally biased toward low complexity; sequence ATSVNSTEETATTVVAAASSTSIPSSEATTPTP. Positions 591–600 are enriched in acidic residues; the sequence is EMPEDGEPDA. Residue Ser-613 is modified to Phosphoserine.

Belongs to the HRD1 family. In terms of assembly, homodimer. Interacts with p53/TP53. Interacts with HTT. Component of the HRD1 complex, which comprises at least SYNV1/HRD1, DERL1/2, FAM8A1, HERPUD1/HERP, OS9, SEL1L and UBE2J1. FAM8A1 is stabilized by interaction with SYNV1, which prevents its proteasomal degradation. OS9 and UBE2J1 recruitment to the complex may be mediated by SEL1L. SYNV1 assembles with SEL1L and FAM8A1 through its transmembrane domains, but interaction with its cytoplasmic domain is required to confer stability to FAM8A1 and enhance recruitment of HERPUD1. The HRD1 complex also associates with VIMP and may transfer misfolded proteins from the endoplasmic reticulum to VCP. May form a complex with ERLEC1, HSPA5, OS9 and SEL1L. Interacts with VCP. Interacts with UBXN6. Interacts with BAG6. Interacts with NFE2L1. Interacts (via N-terminus) with components of the pre-B cell receptor, including IGLL1 and VPREB1. Interacts with CREB3L3; this interaction leads to CREB3L3 ubiquitination and proteasomal degradation. Not N-glycosylated. Post-translationally, auto-ubiquitinated. Deubiquitinated by USP19. In terms of tissue distribution, ubiquitously expressed, with highest levels in liver and kidney (at protein level). Up-regulated in synovial tissues from patients with rheumatoid arthritis (at protein level).

The protein localises to the endoplasmic reticulum membrane. The catalysed reaction is S-ubiquitinyl-[E2 ubiquitin-conjugating enzyme]-L-cysteine + [acceptor protein]-L-lysine = [E2 ubiquitin-conjugating enzyme]-L-cysteine + N(6)-ubiquitinyl-[acceptor protein]-L-lysine.. It functions in the pathway protein modification; protein ubiquitination. E3 ubiquitin-protein ligase which accepts ubiquitin specifically from endoplasmic reticulum-associated UBC7 E2 ligase and transfers it to substrates, promoting their degradation. Component of the endoplasmic reticulum quality control (ERQC) system also called ER-associated degradation (ERAD) involved in ubiquitin-dependent degradation of misfolded endoplasmic reticulum proteins. Also promotes the degradation of normal but naturally short-lived proteins such as SGK. Protects cells from ER stress-induced apoptosis. Protects neurons from apoptosis induced by polyglutamine-expanded huntingtin (HTT) or unfolded GPR37 by promoting their degradation. Sequesters p53/TP53 in the cytoplasm and promotes its degradation, thereby negatively regulating its biological function in transcription, cell cycle regulation and apoptosis. Mediates the ubiquitination and subsequent degradation of cytoplasmic NFE2L1. During the early stage of B cell development, required for degradation of the pre-B cell receptor (pre-BCR) complex, hence supporting further differentiation into mature B cells. The chain is E3 ubiquitin-protein ligase synoviolin from Homo sapiens (Human).